The chain runs to 468 residues: MKQFMDKDFLLSTPTAQHLFHDYAAKMPILDYHCHINPREIAEDRKFENITQVWLGGDHYKWRQMRTNGVDEKYITGDASDREKFQKWAETLEMAIGNPLYHWSHLELQRYFGYNGILNGDTAEEVWNLCNAKLQEDSMSVRNLIKQSNVTLICTTDDPVDSLEWHQVLKDDKTFDVQVLPAWRPDKAMNIEKPEYLDYLETLSNVSGIKVNSFASLIDALKNRMDFFASMGCSVSDHALEYVMYKPYTEEEIEAIFAKRFSGSAITTEEMNKFKTAFMVSVGKEYNKRNWVMQIHYGTIRDNNRFRYDQLGPDTGFDCINTYDCSAEMAQFLNALNATDELPKTIIYSLNPSVNAAIGTVIGCFQDSKAVGKIQQGSAWWFNDHKVGMTNQMTSLANLSLLGNFIGMLTDSRSFLSYTRHEYFRRIMCELIGGWVENGEYPADEKALKKIVEGISYNNAVRYFGFDL.

Belongs to the metallo-dependent hydrolases superfamily. Uronate isomerase family.

The enzyme catalyses D-glucuronate = D-fructuronate. It catalyses the reaction aldehydo-D-galacturonate = keto-D-tagaturonate. Its pathway is carbohydrate metabolism; pentose and glucuronate interconversion. The sequence is that of Uronate isomerase from Lachnospira eligens (strain ATCC 27750 / DSM 3376 / VPI C15-48 / C15-B4) (Eubacterium eligens).